Consider the following 401-residue polypeptide: Probable 2,3-bisphosphoglycerate-independent phosphoglycerate mutase (401 aa).

It belongs to the BPG-independent phosphoglycerate mutase family. A-PGAM subfamily.

It catalyses the reaction (2R)-2-phosphoglycerate = (2R)-3-phosphoglycerate. Its pathway is carbohydrate degradation; glycolysis; pyruvate from D-glyceraldehyde 3-phosphate: step 3/5. In terms of biological role, catalyzes the interconversion of 2-phosphoglycerate and 3-phosphoglycerate. This chain is Probable 2,3-bisphosphoglycerate-independent phosphoglycerate mutase, found in Thermotoga maritima (strain ATCC 43589 / DSM 3109 / JCM 10099 / NBRC 100826 / MSB8).